Reading from the N-terminus, the 308-residue chain is Probable lipid phosphate phosphatase 4 (308 aa).

6 helical membrane passes run 26–46 (WLILVVLGLIDIVLNVIEPFH), 66–86 (IPMWAVPIICILVPICIFIVY), 93–113 (VYDLHHAILGIGFSCLVTGVT), 162–182 (SFPSGHTSWSFAGLTFLAWYL), 193–213 (GHVAKLCLVFLPILISILIGI), and 226–246 (VFAGAIIGIFVASFSYLHFFP). The disordered stretch occupies residues 274 to 308 (MTRTGSRGMLGNDVEPGNSASSPHDRHRESTDSDF). Basic and acidic residues predominate over residues 296-308 (PHDRHRESTDSDF).

This sequence belongs to the PA-phosphatase related phosphoesterase family.

The protein resides in the membrane. The sequence is that of Probable lipid phosphate phosphatase 4 (LPP4) from Arabidopsis thaliana (Mouse-ear cress).